Consider the following 322-residue polypeptide: Reticulocalbin-1 (322 aa).

An N-terminal signal peptide occupies residues 1 to 19 (MDVLGFICAVFLGTVVLHA). Asn44 carries N-linked (GlcNAc...) asparagine glycosylation. EF-hand domains lie at 70–105 (ESKDRLSKIVDRIDGDGNSYITTDELKAWIKRVQKR), 106–141 (YVYENVVKVWADYDLNKDNKISWEEYKQATYGYYLS), 157–192 (KMLPRDERRFKRADLDGDSAANREEFTSFLHPEEFE), 194–229 (MKDIVVLETLEDIDKNSDGHVDEDEYIADMFAHEDR), 235–270 (WVKTEREQFSDFRDLNKDGKMDLDEIRHWIMPQDYD), and 271–306 (HAQAEARHLVYESDKDKDQMLTKEEILDNWNMFVGS). Ca(2+)-binding residues include Asp83, Asp85, Asn87, Tyr89, Glu94, Asp119, Asn121, Asp123, Lys125, Glu130, Asp170, Asp172, Asp174, Glu181, Asp207, Asn209, Asp211, His213, Glu218, Asp248, Asn250, Asp252, Lys254, Glu259, Asp284, Asp286, Asp288, Met290, and Glu295. Residues 319-322 (HDEL) carry the Prevents secretion from ER motif.

Belongs to the CREC family.

It localises to the endoplasmic reticulum lumen. Its function is as follows. May regulate calcium-dependent activities in the endoplasmic reticulum lumen or post-ER compartment. The chain is Reticulocalbin-1 (rcn1) from Takifugu rubripes (Japanese pufferfish).